Consider the following 549-residue polypeptide: Probable amidase (549 aa).

Catalysis depends on charge relay system residues Lys132 and Ser209. The active-site Acyl-ester intermediate is the Ser233.

Belongs to the amidase family.

It catalyses the reaction a monocarboxylic acid amide + H2O = a monocarboxylate + NH4(+). The protein is Probable amidase (AMD2) of Saccharomyces cerevisiae (strain ATCC 204508 / S288c) (Baker's yeast).